The sequence spans 197 residues: Glycerol-3-phosphate acyltransferase (197 aa).

A run of 6 helical transmembrane segments spans residues 1-21 (MNIL…GFLI), 50-70 (WPAL…VKIA), 77-97 (GLIE…PIWL), 111-131 (MFLA…LIVL), 137-157 (VSLS…FYLG), and 158-178 (KFMH…IWKH).

It belongs to the PlsY family. In terms of assembly, probably interacts with PlsX.

The protein resides in the cell inner membrane. The catalysed reaction is an acyl phosphate + sn-glycerol 3-phosphate = a 1-acyl-sn-glycero-3-phosphate + phosphate. Its pathway is lipid metabolism; phospholipid metabolism. In terms of biological role, catalyzes the transfer of an acyl group from acyl-phosphate (acyl-PO(4)) to glycerol-3-phosphate (G3P) to form lysophosphatidic acid (LPA). This enzyme utilizes acyl-phosphate as fatty acyl donor, but not acyl-CoA or acyl-ACP. This chain is Glycerol-3-phosphate acyltransferase, found in Prochlorococcus marinus (strain MIT 9301).